Consider the following 259-residue polypeptide: Hydroxyacylglutathione hydrolase (259 aa).

The Zn(2+) site is built by H56, H58, D60, H61, H112, D133, and H171. The interval 220-243 is disordered; that stretch reads NPFLRTGETSVKEKADERSDAQNT. Residues 229-239 are compositionally biased toward basic and acidic residues; sequence SVKEKADERSD.

Belongs to the metallo-beta-lactamase superfamily. Glyoxalase II family. As to quaternary structure, monomer. The cofactor is Zn(2+).

The catalysed reaction is an S-(2-hydroxyacyl)glutathione + H2O = a 2-hydroxy carboxylate + glutathione + H(+). It participates in secondary metabolite metabolism; methylglyoxal degradation; (R)-lactate from methylglyoxal: step 2/2. Thiolesterase that catalyzes the hydrolysis of S-D-lactoyl-glutathione to form glutathione and D-lactic acid. The sequence is that of Hydroxyacylglutathione hydrolase from Pseudomonas syringae pv. syringae (strain B728a).